The primary structure comprises 142 residues: Ribosome-binding factor A (142 aa).

The segment at 119–142 (ETLGEVQSESDQPTTDETTTVNKT) is disordered. Residues 123 to 142 (EVQSESDQPTTDETTTVNKT) are compositionally biased toward polar residues.

This sequence belongs to the RbfA family. In terms of assembly, monomer. Binds 30S ribosomal subunits, but not 50S ribosomal subunits or 70S ribosomes.

The protein localises to the cytoplasm. Its function is as follows. One of several proteins that assist in the late maturation steps of the functional core of the 30S ribosomal subunit. Associates with free 30S ribosomal subunits (but not with 30S subunits that are part of 70S ribosomes or polysomes). Required for efficient processing of 16S rRNA. May interact with the 5'-terminal helix region of 16S rRNA. The chain is Ribosome-binding factor A from Prochlorococcus marinus (strain MIT 9303).